Reading from the N-terminus, the 217-residue chain is MNQSLLSPFGTAIERVETALISLKQGRGVLVVDDEDRENEGDLIYSAETLTNEQMALLIREGSGIVCLCLPDERVKHLALPPMVENNSSQYGTAFTVSIEAKEGVTTGVSAADRVTTIKTAIADDAQPDDLARPGHVYPLRAQPGGVMTRRGHTEGTIDLMILAGLKPAGVLCEITNPDGTMARLAEIISFGAKHDLPVLTIEDIVEYRKSLMAEAS.

Residues 37–38 (RE), Asp-42, 150–154 (RRGHT), and Glu-174 contribute to the D-ribulose 5-phosphate site. Position 38 (Glu-38) interacts with Mg(2+). A Mg(2+)-binding site is contributed by His-153.

Belongs to the DHBP synthase family. Homodimer. Requires Mg(2+) as cofactor. It depends on Mn(2+) as a cofactor.

The catalysed reaction is D-ribulose 5-phosphate = (2S)-2-hydroxy-3-oxobutyl phosphate + formate + H(+). Its pathway is cofactor biosynthesis; riboflavin biosynthesis; 2-hydroxy-3-oxobutyl phosphate from D-ribulose 5-phosphate: step 1/1. Its function is as follows. Catalyzes the conversion of D-ribulose 5-phosphate to formate and 3,4-dihydroxy-2-butanone 4-phosphate. This is 3,4-dihydroxy-2-butanone 4-phosphate synthase from Shewanella sediminis (strain HAW-EB3).